Reading from the N-terminus, the 196-residue chain is UPF0200 protein MK0400 (196 aa).

7 to 14 (GMPGAGKG) contacts ATP.

This sequence belongs to the UPF0200 family.

This chain is UPF0200 protein MK0400, found in Methanopyrus kandleri (strain AV19 / DSM 6324 / JCM 9639 / NBRC 100938).